The following is a 155-amino-acid chain: 2-C-methyl-D-erythritol 2,4-cyclodiphosphate synthase (155 aa).

A divalent metal cation contacts are provided by Asp-8 and His-10. 4-CDP-2-C-methyl-D-erythritol 2-phosphate is bound by residues 8 to 10 and 34 to 35; these read DVH and HS. His-42 is a binding site for a divalent metal cation. 4-CDP-2-C-methyl-D-erythritol 2-phosphate is bound by residues 56–58, 61–65, 132–135, Phe-139, and Arg-142; these read DIG, FPDSD, and TTEE.

Belongs to the IspF family. As to quaternary structure, homotrimer. The cofactor is a divalent metal cation.

It carries out the reaction 4-CDP-2-C-methyl-D-erythritol 2-phosphate = 2-C-methyl-D-erythritol 2,4-cyclic diphosphate + CMP. Its pathway is isoprenoid biosynthesis; isopentenyl diphosphate biosynthesis via DXP pathway; isopentenyl diphosphate from 1-deoxy-D-xylulose 5-phosphate: step 4/6. Its function is as follows. Involved in the biosynthesis of isopentenyl diphosphate (IPP) and dimethylallyl diphosphate (DMAPP), two major building blocks of isoprenoid compounds. Catalyzes the conversion of 4-diphosphocytidyl-2-C-methyl-D-erythritol 2-phosphate (CDP-ME2P) to 2-C-methyl-D-erythritol 2,4-cyclodiphosphate (ME-CPP) with a corresponding release of cytidine 5-monophosphate (CMP). This chain is 2-C-methyl-D-erythritol 2,4-cyclodiphosphate synthase, found in Clostridium acetobutylicum (strain ATCC 824 / DSM 792 / JCM 1419 / IAM 19013 / LMG 5710 / NBRC 13948 / NRRL B-527 / VKM B-1787 / 2291 / W).